The primary structure comprises 404 residues: Cysteine desulfurase IscS (404 aa).

Pyridoxal 5'-phosphate is bound by residues 75-76 (AT), Asn-155, Gln-183, and 203-205 (SAH). At Lys-206 the chain carries N6-(pyridoxal phosphate)lysine. Pyridoxal 5'-phosphate is bound at residue Thr-243. Cys-328 acts as the Cysteine persulfide intermediate in catalysis. Residue Cys-328 coordinates [2Fe-2S] cluster.

This sequence belongs to the class-V pyridoxal-phosphate-dependent aminotransferase family. NifS/IscS subfamily. In terms of assembly, homodimer. Forms a heterotetramer with IscU, interacts with other sulfur acceptors. The cofactor is pyridoxal 5'-phosphate.

It is found in the cytoplasm. It catalyses the reaction (sulfur carrier)-H + L-cysteine = (sulfur carrier)-SH + L-alanine. Its pathway is cofactor biosynthesis; iron-sulfur cluster biosynthesis. Its function is as follows. Master enzyme that delivers sulfur to a number of partners involved in Fe-S cluster assembly, tRNA modification or cofactor biosynthesis. Catalyzes the removal of elemental sulfur atoms from cysteine to produce alanine. Functions as a sulfur delivery protein for Fe-S cluster synthesis onto IscU, an Fe-S scaffold assembly protein, as well as other S acceptor proteins. The chain is Cysteine desulfurase IscS from Pseudomonas fluorescens (strain ATCC BAA-477 / NRRL B-23932 / Pf-5).